We begin with the raw amino-acid sequence, 648 residues long: Threonine--tRNA ligase (648 aa).

The TGS domain maps to 1 to 61 (MINITFPDGA…TEDGSIEIVT (61 aa)). The tract at residues 242–540 (DHRKLGKELD…LIENYKGAFP (299 aa)) is catalytic. Zn(2+)-binding residues include Cys-336, His-387, and His-517.

It belongs to the class-II aminoacyl-tRNA synthetase family. In terms of assembly, homodimer. The cofactor is Zn(2+).

It localises to the cytoplasm. It catalyses the reaction tRNA(Thr) + L-threonine + ATP = L-threonyl-tRNA(Thr) + AMP + diphosphate + H(+). Its function is as follows. Catalyzes the attachment of threonine to tRNA(Thr) in a two-step reaction: L-threonine is first activated by ATP to form Thr-AMP and then transferred to the acceptor end of tRNA(Thr). Also edits incorrectly charged L-seryl-tRNA(Thr). The protein is Threonine--tRNA ligase of Streptococcus thermophilus (strain ATCC BAA-250 / LMG 18311).